The following is a 391-amino-acid chain: Multidrug resistance protein MdtL (391 aa).

Helical transmembrane passes span 4–24, 42–62, 69–89, 93–113, 131–151, 158–178, 203–222, 245–265, 269–289, 293–313, 331–351, and 356–376; these read FLIC…MYLV, IAFS…GKVA, PVAI…SLAE, LFLA…VVAF, LLNG…HLIM, SLFW…LFIL, FFLS…LTFV, ALTA…LGIF, TLMI…AVSP, VSLF…GVAM, LGIA…VVGI, and MLIG…MFVA.

This sequence belongs to the major facilitator superfamily. DHA1 family. MdtL (TC 2.A.1.2.22) subfamily.

The protein localises to the cell inner membrane. Its function is as follows. Confers resistance to chloramphenicol. In Escherichia coli O139:H28 (strain E24377A / ETEC), this protein is Multidrug resistance protein MdtL.